Reading from the N-terminus, the 209-residue chain is Nucleoside triphosphate pyrophosphatase (209 aa).

Catalysis depends on Asp-79, which acts as the Proton acceptor.

Belongs to the Maf family. It depends on a divalent metal cation as a cofactor.

It localises to the cytoplasm. It catalyses the reaction a ribonucleoside 5'-triphosphate + H2O = a ribonucleoside 5'-phosphate + diphosphate + H(+). It carries out the reaction a 2'-deoxyribonucleoside 5'-triphosphate + H2O = a 2'-deoxyribonucleoside 5'-phosphate + diphosphate + H(+). Its function is as follows. Nucleoside triphosphate pyrophosphatase. May have a dual role in cell division arrest and in preventing the incorporation of modified nucleotides into cellular nucleic acids. The protein is Nucleoside triphosphate pyrophosphatase of Mycolicibacterium vanbaalenii (strain DSM 7251 / JCM 13017 / BCRC 16820 / KCTC 9966 / NRRL B-24157 / PYR-1) (Mycobacterium vanbaalenii).